The chain runs to 510 residues: Lysine--tRNA ligase (510 aa).

Mg(2+) contacts are provided by glutamate 420 and glutamate 427.

It belongs to the class-II aminoacyl-tRNA synthetase family. As to quaternary structure, homodimer. The cofactor is Mg(2+).

Its subcellular location is the cytoplasm. It carries out the reaction tRNA(Lys) + L-lysine + ATP = L-lysyl-tRNA(Lys) + AMP + diphosphate. The polypeptide is Lysine--tRNA ligase (Vibrio vulnificus (strain CMCP6)).